Reading from the N-terminus, the 624-residue chain is ADP,ATP carrier protein 1, chloroplastic (624 aa).

Residues 1–79 constitute a chloroplast transit peptide; that stretch reads MEAVIQTRGL…KERSTEFICK (79 aa). At Ala-80 the chain carries N-acetylalanine. Helical transmembrane passes span 108 to 128, 182 to 202, 240 to 260, 315 to 335, 446 to 466, and 545 to 565; these read VEVA…CILF, ALFY…GFVM, LFYV…FWGF, AMMS…WWVN, LLTG…APLV, and LANS…AWLA. Positions 579 to 624 are disordered; sequence SEEELEKEMERASSVKIPVVSQDESGNGSLGESPSSSPEKSAPTNL. Positions 602–624 are enriched in low complexity; it reads ESGNGSLGESPSSSPEKSAPTNL.

This sequence belongs to the ADP/ATP translocase tlc (TC 2.A.12.2) family.

It localises to the plastid. The protein localises to the chloroplast membrane. May function as an ATP importer. The chain is ADP,ATP carrier protein 1, chloroplastic (AATP1) from Arabidopsis thaliana (Mouse-ear cress).